A 348-amino-acid polypeptide reads, in one-letter code: Phenylalanine--tRNA ligase alpha subunit (348 aa).

Glutamate 259 is a binding site for Mg(2+).

The protein belongs to the class-II aminoacyl-tRNA synthetase family. Phe-tRNA synthetase alpha subunit type 1 subfamily. As to quaternary structure, tetramer of two alpha and two beta subunits. The cofactor is Mg(2+).

The protein localises to the cytoplasm. The catalysed reaction is tRNA(Phe) + L-phenylalanine + ATP = L-phenylalanyl-tRNA(Phe) + AMP + diphosphate + H(+). In Lacticaseibacillus casei (strain BL23) (Lactobacillus casei), this protein is Phenylalanine--tRNA ligase alpha subunit.